A 104-amino-acid polypeptide reads, in one-letter code: uncharacterized protein (104 aa).

The next 2 membrane-spanning stretches (helical) occupy residues 16-36 (LAFFYIIDGAIIALMLVLASY) and 44-64 (GGFGRIMFYVLFGTFGLFLCI).

It is found in the cell membrane. This is an uncharacterized protein from Bacillus anthracis.